The sequence spans 242 residues: Small ribosomal subunit protein uS2 (242 aa).

It belongs to the universal ribosomal protein uS2 family.

The chain is Small ribosomal subunit protein uS2 from Shewanella frigidimarina (strain NCIMB 400).